The chain runs to 116 residues: Small ribosomal subunit protein bS16 (116 aa).

It belongs to the bacterial ribosomal protein bS16 family.

The protein is Small ribosomal subunit protein bS16 of Chlamydia trachomatis serovar A (strain ATCC VR-571B / DSM 19440 / HAR-13).